The sequence spans 72 residues: UPF0352 protein HI_0840 (72 aa).

This sequence belongs to the UPF0352 family.

The sequence is that of UPF0352 protein HI_0840 from Haemophilus influenzae (strain ATCC 51907 / DSM 11121 / KW20 / Rd).